We begin with the raw amino-acid sequence, 742 residues long: Ion-translocating oxidoreductase complex subunit C (742 aa).

4Fe-4S ferredoxin-type domains follow at residues Gly369–Tyr397 and Lys407–Phe436. Residues Cys377, Cys380, Cys383, Cys387, Cys416, Cys419, Cys422, and Cys426 each contribute to the [4Fe-4S] cluster site. Residues Lys602–Ala719 form a disordered region.

Belongs to the 4Fe4S bacterial-type ferredoxin family. RnfC subfamily. As to quaternary structure, the complex is composed of six subunits: RsxA, RsxB, RsxC, RsxD, RsxE and RsxG. [4Fe-4S] cluster serves as cofactor.

It is found in the cell inner membrane. In terms of biological role, part of a membrane-bound complex that couples electron transfer with translocation of ions across the membrane. Required to maintain the reduced state of SoxR. The protein is Ion-translocating oxidoreductase complex subunit C of Escherichia coli O6:H1 (strain CFT073 / ATCC 700928 / UPEC).